A 95-amino-acid polypeptide reads, in one-letter code: Mitochondrial import inner membrane translocase subunit Tim13 (95 aa).

The short motif at 46 to 69 (CFKKCIGKPGSTLDNSEQKCIAMC) is the Twin CX3C motif element. 2 disulfide bridges follow: Cys46–Cys69 and Cys50–Cys65.

Belongs to the small Tim family. Heterohexamer; composed of 3 copies of TIMM8 (TIMM8A or TIMM8B) and 3 copies of TIMM13, named soluble 70 kDa complex. Associates with the TIM22 complex, whose core is composed of TIMM22.

It localises to the mitochondrion inner membrane. In terms of biological role, mitochondrial intermembrane chaperone that participates in the import and insertion of some multi-pass transmembrane proteins into the mitochondrial inner membrane. Also required for the transfer of beta-barrel precursors from the TOM complex to the sorting and assembly machinery (SAM complex) of the outer membrane. Acts as a chaperone-like protein that protects the hydrophobic precursors from aggregation and guide them through the mitochondrial intermembrane space. The TIMM8-TIMM13 complex mediates the import of some proteins while the predominant TIMM9-TIMM10 70 kDa complex mediates the import of much more proteins. This is Mitochondrial import inner membrane translocase subunit Tim13 (timm13) from Danio rerio (Zebrafish).